The sequence spans 880 residues: Valine--tRNA ligase (880 aa).

A 'HIGH' region motif is present at residues 49-59 (PNVTGRLHLGH). The 'KMSKS' region signature appears at 525 to 529 (KMSKS). Residue K528 coordinates ATP. Positions 809–879 (LEGLINIDEE…AVQKRMAELK (71 aa)) form a coiled coil.

This sequence belongs to the class-I aminoacyl-tRNA synthetase family. ValS type 1 subfamily. Monomer.

It is found in the cytoplasm. It carries out the reaction tRNA(Val) + L-valine + ATP = L-valyl-tRNA(Val) + AMP + diphosphate. As ValRS can inadvertently accommodate and process structurally similar amino acids such as threonine, to avoid such errors, it has a 'posttransfer' editing activity that hydrolyzes mischarged Thr-tRNA(Val) in a tRNA-dependent manner. Catalyzes the attachment of valine to tRNA(Val). The protein is Valine--tRNA ligase of Bacillus subtilis (strain 168).